The primary structure comprises 342 residues: 4-hydroxy-2-oxovalerate aldolase (342 aa).

The Pyruvate carboxyltransferase domain maps to 7–257; it reads IWITEVALRD…KTGVDLYKMM (251 aa). A substrate-binding site is contributed by 15 to 16; sequence RD. Mn(2+) is bound at residue Asp16. His19 acts as the Proton acceptor in catalysis. Positions 169 and 196 each coordinate substrate. 2 residues coordinate Mn(2+): His196 and His198. Substrate is bound at residue Tyr287.

The protein belongs to the 4-hydroxy-2-oxovalerate aldolase family.

The catalysed reaction is (S)-4-hydroxy-2-oxopentanoate = acetaldehyde + pyruvate. The protein is 4-hydroxy-2-oxovalerate aldolase (nbaI) of Geobacillus thermodenitrificans (strain NG80-2).